The chain runs to 214 residues: uncharacterized protein (214 aa).

The next 2 membrane-spanning stretches (helical) occupy residues 19–39 and 50–70; these read IAIF…SYIL and LALF…LLIG.

The protein localises to the cell membrane. This is an uncharacterized protein from Methanocaldococcus jannaschii (strain ATCC 43067 / DSM 2661 / JAL-1 / JCM 10045 / NBRC 100440) (Methanococcus jannaschii).